The following is a 176-amino-acid chain: UBA-like domain-containing protein 1 (176 aa).

Low complexity-rich tracts occupy residues 88–105 (ESFH…TSAT) and 120–137 (TPSW…QHLQ). The segment at 88–176 (ESFHSGGSSG…RAHPAMEAER (89 aa)) is disordered. The span at 138 to 150 (PQPPLWTPAPPSP) shows a compositional bias: pro residues. The span at 166–176 (PRAHPAMEAER) shows a compositional bias: basic and acidic residues.

It belongs to the UBALD family.

The protein is UBA-like domain-containing protein 1 (Ubald1) of Rattus norvegicus (Rat).